A 274-amino-acid chain; its full sequence is Large ribosomal subunit protein uL2 (274 aa).

Positions 223–265 are disordered; it reads VVMNPVDHPHGGGEGRTSGGRHPVSPWGVPTKGYKTRSNKRTD.

The protein belongs to the universal ribosomal protein uL2 family. In terms of assembly, part of the 50S ribosomal subunit. Forms a bridge to the 30S subunit in the 70S ribosome.

Its function is as follows. One of the primary rRNA binding proteins. Required for association of the 30S and 50S subunits to form the 70S ribosome, for tRNA binding and peptide bond formation. It has been suggested to have peptidyltransferase activity; this is somewhat controversial. Makes several contacts with the 16S rRNA in the 70S ribosome. This Vibrio vulnificus (strain CMCP6) protein is Large ribosomal subunit protein uL2.